The primary structure comprises 486 residues: uncharacterized protein (486 aa).

ABC transporter domains are found at residues 2 to 241 and 249 to 486; these read VEFK…KVFV and FEKD…LLFL. ATP is bound at residue 36–43; it reads GKNGEGKS.

It belongs to the ABC transporter superfamily.

This is an uncharacterized protein from Borreliella burgdorferi (strain ATCC 35210 / DSM 4680 / CIP 102532 / B31) (Borrelia burgdorferi).